Reading from the N-terminus, the 364-residue chain is Protein PTOV1 homolog (364 aa).

Residues 187 to 207 form a disordered region; that stretch reads AKRKPGVKTPKQPQPEEPPPV.

This sequence belongs to the Mediator complex subunit 25 family. PTOV1 subfamily.

The protein is Protein PTOV1 homolog of Drosophila melanogaster (Fruit fly).